Reading from the N-terminus, the 319-residue chain is MDQLVPAERYSPYRFFSAEDWAKFRADTPLTLTEDEVRRLRSLNDPVNLEEVRRIYLSMSRLLSAHVEASQLLFQQRQVFFDSDHAVKTPFIIGIAGSVAVGKSTTARVLKELLTRWPSSPKVDLITTDGFLLPNAVLSHEGLMERKGFPESYDVGAILRFLSGIKAGLPNMRAPIYSHLTYDVVPGEFAVIDRPDILIFEGINVLQTRDLPRDGKAVPFVSDFFDFSIYIDAPEELIHEWYVDRFMRLRETAFRDPNSFFHRYSTLPEVEARTIAEELWTNINLKNLRENILPTRPRADLILRKGTNHLVQEVALRKL.

G97 to S104 serves as a coordination point for ATP.

Belongs to the prokaryotic pantothenate kinase family.

The protein resides in the cytoplasm. It carries out the reaction (R)-pantothenate + ATP = (R)-4'-phosphopantothenate + ADP + H(+). The protein operates within cofactor biosynthesis; coenzyme A biosynthesis; CoA from (R)-pantothenate: step 1/5. The sequence is that of Pantothenate kinase from Chelativorans sp. (strain BNC1).